A 122-amino-acid chain; its full sequence is MNMMRIFYIGLSGVGMMFSSMASGNDAGGLQSPACGVVCDPYICVNSDGISPELTRKYLGEKAAENLQSLQGYDPSEFTFANGVFCDVKEKLCRDDRYFGVDGKRSGKINQTTTKMLFMCRE.

Residues 1 to 22 form the signal peptide; that stretch reads MNMMRIFYIGLSGVGMMFSSMA.

This is an uncharacterized protein from Escherichia coli (strain K12).